A 250-amino-acid chain; its full sequence is Probable transcriptional regulatory protein Cphamn1_0542 (250 aa).

The protein belongs to the TACO1 family.

The protein resides in the cytoplasm. In Chlorobium phaeobacteroides (strain BS1), this protein is Probable transcriptional regulatory protein Cphamn1_0542.